The following is a 383-amino-acid chain: MLLFRADYNNYAVSELQKLRFDEDEFYKKYDNCVLVQTCNRIEIYFDKNAKIIDINEFAEFEMIKSNNAIKHLLRTASGLNSMIVGEDQIIGQIKNSHRKAKELKKTTKYLDTIFLKAIHTGQKVRNNTKINKGCVSIGSAAVQLAEKTVGLNNKNILVVGAGEIATLVAKALIEKNIRAIVVSNRTYERAELLAKKLNGMAVHFDKLGEAINYNDIIICATGAPHAIIDKDRLKNIKGYKVLIDIANPRDVSDDVMELPNIKLYTIDDLKMVSEENLKKRKDEIPRVEKIIEEELSVLTKQLRKLKFENTIKNYDLYIENLRKREMNKALNMIENGKDPTVVLEKFSKVFANKLISDFVNIVNDDTIGDIERVVNKLNKNKI.

Substrate is bound by residues 38–41 (TCNR), S82, 87–89 (EDQ), and Q93. C39 acts as the Nucleophile in catalysis. An NADP(+)-binding site is contributed by 161–166 (GAGEIA).

It belongs to the glutamyl-tRNA reductase family. In terms of assembly, homodimer.

The catalysed reaction is (S)-4-amino-5-oxopentanoate + tRNA(Glu) + NADP(+) = L-glutamyl-tRNA(Glu) + NADPH + H(+). It participates in porphyrin-containing compound metabolism; protoporphyrin-IX biosynthesis; 5-aminolevulinate from L-glutamyl-tRNA(Glu): step 1/2. In terms of biological role, catalyzes the NADPH-dependent reduction of glutamyl-tRNA(Glu) to glutamate 1-semialdehyde (GSA). The sequence is that of Glutamyl-tRNA reductase from Methanococcus aeolicus (strain ATCC BAA-1280 / DSM 17508 / OCM 812 / Nankai-3).